Consider the following 161-residue polypeptide: Pleiotrophin-B (161 aa).

Positions 1 to 23 (MHHQHGLFMLALLAFLLVMTVLG) are cleaved as a signal peptide. 5 disulfides stabilise this stretch: Cys41/Cys70, Cys49/Cys79, Cys56/Cys83, Cys93/Cys125, and Cys103/Cys135. Chondroitin sulfate binding stretches follow at residues 86 to 93 (KKQFGAEC) and 117 to 125 (KRALHNAEC). Residues 136–161 (GKVTKPKLQESKKKKKEGKNKEKLLD) are disordered. Residues 141–161 (PKLQESKKKKKEGKNKEKLLD) are chondroitin sulfate A binding.

This sequence belongs to the pleiotrophin family. In terms of tissue distribution, expressed in high levels in brain and eye. Lower levels in bone. In the tailbud embryo stage, it is expressed exclusively in the central nervous system, especially in the hind region of the brain.

It is found in the secreted. Secreted growth factor that mediates its signal through cell-surface proteoglycan and non-proteoglycan receptors. Binds cell-surface proteoglycan receptor via their chondroitin sulfate (CS) groups. Thereby regulates many processes like cell proliferation, cell survival, cell growth, cell differentiation and cell migration. Has antibacterial activity against both Gram-positive and Gram-negative bacteria. This is Pleiotrophin-B (ptn-b) from Xenopus laevis (African clawed frog).